Consider the following 124-residue polypeptide: Small ribosomal subunit protein uS12 (124 aa).

Asp89 carries the 3-methylthioaspartic acid modification. Residues 102–124 (LDTSGVNNRKHGRSKYGTKRPKS) are disordered. Basic residues predominate over residues 109–124 (NRKHGRSKYGTKRPKS).

The protein belongs to the universal ribosomal protein uS12 family. Part of the 30S ribosomal subunit. Contacts proteins S8 and S17. May interact with IF1 in the 30S initiation complex.

Functionally, with S4 and S5 plays an important role in translational accuracy. Interacts with and stabilizes bases of the 16S rRNA that are involved in tRNA selection in the A site and with the mRNA backbone. Located at the interface of the 30S and 50S subunits, it traverses the body of the 30S subunit contacting proteins on the other side and probably holding the rRNA structure together. The combined cluster of proteins S8, S12 and S17 appears to hold together the shoulder and platform of the 30S subunit. The protein is Small ribosomal subunit protein uS12 of Francisella tularensis subsp. tularensis (strain FSC 198).